We begin with the raw amino-acid sequence, 263 residues long: Thiamine thiazole synthase (263 aa).

NAD(+)-binding positions include Ser43, 62–63 (ER), Gly70, Val134, and 160–162 (HID). Fe cation contacts are provided by Asp162 and His177. 2 residues coordinate NAD(+): Ser180 and Met227. Arg237 is a binding site for glycine.

It belongs to the THI4 family. In terms of assembly, homooctamer; tetramer of dimers. Fe(2+) is required as a cofactor.

The catalysed reaction is hydrogen sulfide + glycine + NAD(+) = ADP-5-ethyl-4-methylthiazole-2-carboxylate + nicotinamide + 3 H2O + H(+). Its pathway is cofactor biosynthesis; thiamine diphosphate biosynthesis. Involved in the biosynthesis of the thiazole moiety of thiamine. Catalyzes the conversion of NAD and glycine to adenosine diphosphate 5-(2-hydroxyethyl)-4-methylthiazole-2-carboxylate (ADT), an adenylated thiazole intermediate, using free sulfide as a source of sulfur. The polypeptide is Thiamine thiazole synthase (Methanococcus aeolicus (strain ATCC BAA-1280 / DSM 17508 / OCM 812 / Nankai-3)).